A 348-amino-acid polypeptide reads, in one-letter code: Phosphoribosylformylglycinamidine cyclo-ligase (348 aa).

The protein belongs to the AIR synthase family.

Its subcellular location is the cytoplasm. It carries out the reaction 2-formamido-N(1)-(5-O-phospho-beta-D-ribosyl)acetamidine + ATP = 5-amino-1-(5-phospho-beta-D-ribosyl)imidazole + ADP + phosphate + H(+). It participates in purine metabolism; IMP biosynthesis via de novo pathway; 5-amino-1-(5-phospho-D-ribosyl)imidazole from N(2)-formyl-N(1)-(5-phospho-D-ribosyl)glycinamide: step 2/2. This is Phosphoribosylformylglycinamidine cyclo-ligase from Cereibacter sphaeroides (strain ATCC 17023 / DSM 158 / JCM 6121 / CCUG 31486 / LMG 2827 / NBRC 12203 / NCIMB 8253 / ATH 2.4.1.) (Rhodobacter sphaeroides).